Here is a 200-residue protein sequence, read N- to C-terminus: ATP-dependent Clp protease proteolytic subunit 1 (200 aa).

Serine 102 serves as the catalytic Nucleophile. Histidine 127 is an active-site residue.

This sequence belongs to the peptidase S14 family. In terms of assembly, fourteen ClpP subunits assemble into 2 heptameric rings which stack back to back to give a disk-like structure with a central cavity, resembling the structure of eukaryotic proteasomes.

It is found in the cytoplasm. It carries out the reaction Hydrolysis of proteins to small peptides in the presence of ATP and magnesium. alpha-casein is the usual test substrate. In the absence of ATP, only oligopeptides shorter than five residues are hydrolyzed (such as succinyl-Leu-Tyr-|-NHMec, and Leu-Tyr-Leu-|-Tyr-Trp, in which cleavage of the -Tyr-|-Leu- and -Tyr-|-Trp bonds also occurs).. Cleaves peptides in various proteins in a process that requires ATP hydrolysis. Has a chymotrypsin-like activity. Plays a major role in the degradation of misfolded proteins. The chain is ATP-dependent Clp protease proteolytic subunit 1 from Bradyrhizobium diazoefficiens (strain JCM 10833 / BCRC 13528 / IAM 13628 / NBRC 14792 / USDA 110).